A 1383-amino-acid polypeptide reads, in one-letter code: Cell surface hyaluronidase CEMIP2 (1383 aa).

Residues 1–50 (MYATDSRGHSPAFLQPQNGNSRHPSGYVPGKVVPLRPPPPPKSQASAKFT) are disordered. Residues 1 to 82 (MYATDSRGHS…SQKQKRHKNT (82 aa)) are Cytoplasmic-facing. Phosphoserine is present on residues serine 10 and serine 63. The chain crosses the membrane as a helical; Signal-anchor for type II membrane protein span at residues 83–103 (FICFAITSFSFFIALAIILGI). Residues 104–1383 (SSKYAPDENC…ELLKQASKAH (1280 aa)) lie on the Extracellular side of the membrane. A G8 domain is found at 121-245 (RNWDPGQDSA…RKASWTLLAR (125 aa)). Asparagine 248 and asparagine 292 each carry an N-linked (GlcNAc...) asparagine glycan. Residues 255 to 412 (GSYTFEKDFS…VSLSGFRVEV (158 aa)) enclose the GG-type lectin 1 domain. PbH1 repeat units follow at residues 669–691 (HPNN…WYLF), 711–733 (TPLG…FIDK), and 791–812 (GGDI…TFAS). Asparagine 914 and asparagine 1234 each carry an N-linked (GlcNAc...) asparagine glycan. The GG-type lectin 2 domain occupies 1208–1366 (KSYLPVQFQS…LDEYGCPRAT (159 aa)).

It belongs to the CEMIP family. As to expression, widely expressed.

The protein resides in the cell membrane. It catalyses the reaction Random hydrolysis of (1-&gt;4)-linkages between N-acetyl-beta-D-glucosamine and D-glucuronate residues in hyaluronate.. Functionally, cell surface hyaluronidase that mediates the initial cleavage of extracellular high-molecular-weight hyaluronan into intermediate-size hyaluronan of approximately 10-5 kDa fragments. Very specific to hyaluronan; not able to cleave chondroitin sulfate or dermatan sulfate. Has an essential function in systemic hyaluronan catabolism and turnover and regulates cell adhesion and migration via hyaluronan degradation at focal adhesion sites. Acts as a regulator of angiogenesis and heart morphogenesis by mediating degradation of extracellular hyaluronan, thereby regulating VEGF signaling. This Homo sapiens (Human) protein is Cell surface hyaluronidase CEMIP2.